The following is a 105-amino-acid chain: Large ribosomal subunit protein uL24 (105 aa).

It belongs to the universal ribosomal protein uL24 family. Part of the 50S ribosomal subunit.

Functionally, one of two assembly initiator proteins, it binds directly to the 5'-end of the 23S rRNA, where it nucleates assembly of the 50S subunit. One of the proteins that surrounds the polypeptide exit tunnel on the outside of the subunit. The polypeptide is Large ribosomal subunit protein uL24 (Tolumonas auensis (strain DSM 9187 / NBRC 110442 / TA 4)).